A 429-amino-acid chain; its full sequence is MPVESEHFETLQLHAGQEPDAATSSRAVPIYATTSYVFRDCDHGGRLFGLQEPGYIYSRMMNPTADVFEKRIAALEHGAAAIATSSGTSALFMALTTLAKAGDNIVSTSYLYGGTYNLFKVTLPRLGITTKFVNGDDPNDLAAQIDENTKAVYVESIGNPMYNVPDFERIAEVAHAAGVPLMVDNTFGGGGYLVRPIDHGADIVTHSATKWIGGHGTTIGGVIVDSGKFDWKKNSKRFPEFNEPHPGYHGMVFTETFGNLAYAFACRTQTLRDVGGNANPFGVFLLLQGLETLSLRMERHVQNAFALAKYLEKHPKVNWVSYPGLESHVSHKLAKKYLKNGYGAVLSFGAKGGPDQSRKVVNALKLASQLANVGDAKTLVIAPAYTTHLQLTDEEQISAGVTKDLIRVAVGIEHIDDIIADFAQALEVA.

N6-(pyridoxal phosphate)lysine is present on Lys210.

Belongs to the trans-sulfuration enzymes family. In terms of assembly, homotetramer. It depends on pyridoxal 5'-phosphate as a cofactor.

The protein resides in the cytoplasm. Its subcellular location is the nucleus. It catalyses the reaction O-acetyl-L-homoserine + methanethiol = L-methionine + acetate + H(+). The enzyme catalyses O-acetyl-L-homoserine + hydrogen sulfide = L-homocysteine + acetate. It functions in the pathway amino-acid biosynthesis; L-methionine biosynthesis via de novo pathway; L-homocysteine from O-acetyl-L-homoserine. Its function is as follows. Catalyzes the conversion of O-acetyl-L-homoserine (OAH) into homocysteine in the methionine biosynthesis pathway. Can also use O-succinyl-L-homoserine and L-homoserine as substrates. Also has cysteine synthase (O-acetylserine sulfhydrylase) activity in vitro, but in S.pombe, it seems only to be involved in the alternative pathway of methionine biosynthesis under cysteine deficiency conditions. This is Homocysteine synthase from Schizosaccharomyces pombe (strain 972 / ATCC 24843) (Fission yeast).